Reading from the N-terminus, the 234-residue chain is Peptidase E (234 aa).

Residues Ser123, Asp138, and His160 each act as charge relay system in the active site.

Belongs to the peptidase S51 family.

Its subcellular location is the cytoplasm. The catalysed reaction is Dipeptidase E catalyzes the hydrolysis of dipeptides Asp-|-Xaa. It does not act on peptides with N-terminal Glu, Asn or Gln, nor does it cleave isoaspartyl peptides.. Functionally, hydrolyzes dipeptides containing N-terminal aspartate residues. May play a role in allowing the cell to use peptide aspartate to spare carbon otherwise required for the synthesis of the aspartate family of amino acids. In Actinobacillus pleuropneumoniae serotype 7 (strain AP76), this protein is Peptidase E.